A 304-amino-acid polypeptide reads, in one-letter code: Ribonuclease Z (304 aa).

Residues His-63, His-65, Asp-67, His-68, His-143, Asp-213, and His-271 each coordinate Zn(2+). Asp-67 (proton acceptor) is an active-site residue.

The protein belongs to the RNase Z family. As to quaternary structure, homodimer. The cofactor is Zn(2+).

The catalysed reaction is Endonucleolytic cleavage of RNA, removing extra 3' nucleotides from tRNA precursor, generating 3' termini of tRNAs. A 3'-hydroxy group is left at the tRNA terminus and a 5'-phosphoryl group is left at the trailer molecule.. Zinc phosphodiesterase, which displays some tRNA 3'-processing endonuclease activity. Probably involved in tRNA maturation, by removing a 3'-trailer from precursor tRNA. The chain is Ribonuclease Z from Parabacteroides distasonis (strain ATCC 8503 / DSM 20701 / CIP 104284 / JCM 5825 / NCTC 11152).